The following is a 240-amino-acid chain: MQPYLKKNTHATDDPKASPLKEGSPDNPESPLISADIVLPEDEFASYQSYLLYEIVRAKYIMINFLLFVVTILATLTDIWFSGVLSPAMVIRICLGGSMVVLQIWSFSRPISNETFRTKLLLEVITHRPSIAGKEWKTITYNMNQYLFKAGLWKTPYHFFCEHQCYEFFKDLIKGKYPDVQWDTANTQPFISVPENQAATQNSDVEPTVKWCLFKAAEIQAHAVREYWQSQYPDVGIPAI.

The tract at residues Met1 to Glu29 is disordered. A run of 2 helical transmembrane segments spans residues Ile61–Phe81 and Val84–Ile104.

It belongs to the DUP/COS family.

It localises to the membrane. The polypeptide is DUP240 protein DFP1 (Saccharomyces cerevisiae (Baker's yeast)).